The chain runs to 873 residues: DNA mismatch repair protein MutS (873 aa).

The interval 1-34 (MAAIPTPRLHRGVTHLSRQTKSRARHPMSTPQHT) is disordered. The segment covering 8-26 (RLHRGVTHLSRQTKSRARH) has biased composition (basic residues). 635–642 (GPNMGGKS) contributes to the ATP binding site.

Belongs to the DNA mismatch repair MutS family.

Functionally, this protein is involved in the repair of mismatches in DNA. It is possible that it carries out the mismatch recognition step. This protein has a weak ATPase activity. The sequence is that of DNA mismatch repair protein MutS from Chromobacterium violaceum (strain ATCC 12472 / DSM 30191 / JCM 1249 / CCUG 213 / NBRC 12614 / NCIMB 9131 / NCTC 9757 / MK).